Consider the following 391-residue polypeptide: Phosphoglycerate kinase (391 aa).

Residues 21-23 (DLN), R36, 59-62 (HLGR), R113, and R146 contribute to the substrate site. Residues K197, E319, and 345 to 348 (GGDT) contribute to the ATP site.

This sequence belongs to the phosphoglycerate kinase family. As to quaternary structure, monomer.

It localises to the cytoplasm. It carries out the reaction (2R)-3-phosphoglycerate + ATP = (2R)-3-phospho-glyceroyl phosphate + ADP. It participates in carbohydrate degradation; glycolysis; pyruvate from D-glyceraldehyde 3-phosphate: step 2/5. The protein is Phosphoglycerate kinase of Shewanella sediminis (strain HAW-EB3).